A 264-amino-acid polypeptide reads, in one-letter code: S-adenosylmethionine decarboxylase proenzyme (264 aa).

Ser113 functions as the Schiff-base intermediate with substrate; via pyruvic acid in the catalytic mechanism. Ser113 is subject to Pyruvic acid (Ser); by autocatalysis. His118 acts as the Proton acceptor; for processing activity in catalysis. The Proton donor; for catalytic activity role is filled by Cys141.

It belongs to the prokaryotic AdoMetDC family. Type 2 subfamily. In terms of assembly, heterooctamer of four alpha and four beta chains arranged as a tetramer of alpha/beta heterodimers. Pyruvate serves as cofactor. In terms of processing, is synthesized initially as an inactive proenzyme. Formation of the active enzyme involves a self-maturation process in which the active site pyruvoyl group is generated from an internal serine residue via an autocatalytic post-translational modification. Two non-identical subunits are generated from the proenzyme in this reaction, and the pyruvate is formed at the N-terminus of the alpha chain, which is derived from the carboxyl end of the proenzyme. The post-translation cleavage follows an unusual pathway, termed non-hydrolytic serinolysis, in which the side chain hydroxyl group of the serine supplies its oxygen atom to form the C-terminus of the beta chain, while the remainder of the serine residue undergoes an oxidative deamination to produce ammonia and the pyruvoyl group blocking the N-terminus of the alpha chain.

It carries out the reaction S-adenosyl-L-methionine + H(+) = S-adenosyl 3-(methylsulfanyl)propylamine + CO2. It participates in amine and polyamine biosynthesis; S-adenosylmethioninamine biosynthesis; S-adenosylmethioninamine from S-adenosyl-L-methionine: step 1/1. In terms of biological role, catalyzes the decarboxylation of S-adenosylmethionine to S-adenosylmethioninamine (dcAdoMet), the propylamine donor required for the synthesis of the polyamines spermine and spermidine from the diamine putrescine. In Pseudomonas syringae pv. syringae (strain B728a), this protein is S-adenosylmethionine decarboxylase proenzyme.